Consider the following 69-residue polypeptide: uncharacterized protein (69 aa).

Positions 10 to 64 (IRAFRKLKGYTQEGFAKALGISVSILGEIERGNRLPSAAIIQDAADVLNISADEL) constitute an HTH cro/C1-type domain. Positions 21–40 (QEGFAKALGISVSILGEIER) form a DNA-binding region, H-T-H motif.

This is an uncharacterized protein from Bacillus subtilis (strain 168).